Reading from the N-terminus, the 461-residue chain is Diaboline synthase (461 aa).

Active-site proton acceptor residues include His185 and Asp400.

This sequence belongs to the plant acyltransferase family. As to quaternary structure, monomer.

The protein localises to the cytoplasm. The enzyme catalyses 17,18-epoxy-17-hydroxycur-19-ene + acetyl-CoA = diaboline + CoA. It functions in the pathway alkaloid biosynthesis. Functionally, acetyltransferase involved in the biosynthesis of curare monoterpene indole alkaloids (MIAs), natural products such as diaboline, a pharmacologically active compound used to regulate blood pressure. Curare alkaloids act as animal glycine receptor antagonists. Catalyzes the conversion of 17,18-epoxy-17-hydroxycur-19-ene (Wieland-Gumlich aldehyde) to diaboline. The sequence is that of Diaboline synthase from Strychnos sp.